The primary structure comprises 201 residues: Small ribosomal subunit protein uS4c (201 aa).

The 64-residue stretch at 89–152 folds into the S4 RNA-binding domain; it reads MRLDNILFRL…NSRTLVQNLL (64 aa).

This sequence belongs to the universal ribosomal protein uS4 family. As to quaternary structure, part of the 30S ribosomal subunit. Contacts protein S5. The interaction surface between S4 and S5 is involved in control of translational fidelity.

It localises to the plastid. The protein localises to the chloroplast. Its function is as follows. One of the primary rRNA binding proteins, it binds directly to 16S rRNA where it nucleates assembly of the body of the 30S subunit. Functionally, with S5 and S12 plays an important role in translational accuracy. The protein is Small ribosomal subunit protein uS4c (rps4) of Capsella bursa-pastoris (Shepherd's purse).